A 180-amino-acid polypeptide reads, in one-letter code: Large ribosomal subunit protein uL6 (180 aa).

It belongs to the universal ribosomal protein uL6 family. In terms of assembly, part of the 50S ribosomal subunit.

Its function is as follows. This protein binds to the 23S rRNA, and is important in its secondary structure. It is located near the subunit interface in the base of the L7/L12 stalk, and near the tRNA binding site of the peptidyltransferase center. This chain is Large ribosomal subunit protein uL6, found in Borrelia duttonii (strain Ly).